A 151-amino-acid polypeptide reads, in one-letter code: Transcriptional regulator MraZ (151 aa).

2 SpoVT-AbrB domains span residues 5 to 52 (ANAI…PLPE) and 81 to 124 (AVDL…DEDA).

This sequence belongs to the MraZ family. As to quaternary structure, forms oligomers.

It is found in the cytoplasm. The protein localises to the nucleoid. The polypeptide is Transcriptional regulator MraZ (Pseudomonas aeruginosa (strain LESB58)).